We begin with the raw amino-acid sequence, 611 residues long: Glutamine--fructose-6-phosphate aminotransferase [isomerizing] (611 aa).

The Nucleophile; for GATase activity role is filled by Cys2. Residues 2 to 219 form the Glutamine amidotransferase type-2 domain; that stretch reads CGIVGAVAER…EGDIAEIRRD (218 aa). SIS domains are found at residues 287 to 427 and 460 to 601; these read AADL…VRGT and IAEL…VDQP. Lys606 functions as the For Fru-6P isomerization activity in the catalytic mechanism.

In terms of assembly, homodimer.

The protein localises to the cytoplasm. The catalysed reaction is D-fructose 6-phosphate + L-glutamine = D-glucosamine 6-phosphate + L-glutamate. Functionally, catalyzes the first step in hexosamine metabolism, converting fructose-6P into glucosamine-6P using glutamine as a nitrogen source. This chain is Glutamine--fructose-6-phosphate aminotransferase [isomerizing], found in Pseudomonas putida (strain ATCC 47054 / DSM 6125 / CFBP 8728 / NCIMB 11950 / KT2440).